We begin with the raw amino-acid sequence, 162 residues long: Large ribosomal subunit protein uL10 (162 aa).

Belongs to the universal ribosomal protein uL10 family. As to quaternary structure, part of the ribosomal stalk of the 50S ribosomal subunit. The N-terminus interacts with L11 and the large rRNA to form the base of the stalk. The C-terminus forms an elongated spine to which L12 dimers bind in a sequential fashion forming a multimeric L10(L12)X complex.

In terms of biological role, forms part of the ribosomal stalk, playing a central role in the interaction of the ribosome with GTP-bound translation factors. This is Large ribosomal subunit protein uL10 (rplJ) from Borreliella burgdorferi (strain ATCC 35210 / DSM 4680 / CIP 102532 / B31) (Borrelia burgdorferi).